The following is a 253-amino-acid chain: Tryptophan synthase alpha chain (253 aa).

Catalysis depends on proton acceptor residues Glu46 and Asp57.

It belongs to the TrpA family. Tetramer of two alpha and two beta chains.

The catalysed reaction is (1S,2R)-1-C-(indol-3-yl)glycerol 3-phosphate + L-serine = D-glyceraldehyde 3-phosphate + L-tryptophan + H2O. The protein operates within amino-acid biosynthesis; L-tryptophan biosynthesis; L-tryptophan from chorismate: step 5/5. Functionally, the alpha subunit is responsible for the aldol cleavage of indoleglycerol phosphate to indole and glyceraldehyde 3-phosphate. This Dictyoglomus thermophilum (strain ATCC 35947 / DSM 3960 / H-6-12) protein is Tryptophan synthase alpha chain.